The chain runs to 474 residues: Coronin-1C (474 aa).

WD repeat units lie at residues 78-118, 128-168, 172-202, 215-249, and 263-303; these read GHTG…LTLS, GHSK…ALIN, MHSDMIYNVSWSRNGSLICTASKDKKVRVID, AHEGARPMRAIFLADGNVFTTGFSRMSERQLALWN, and DTSN…PYVH. A coiled-coil region spans residues 435–474; that stretch reads VQNEAKLDEILKEIKSIKETICSQDERISKLEQQLAKMAA. K446 is subject to N6-acetyllysine.

Belongs to the WD repeat coronin family. Homotrimer. Binds F-actin. Interacts with RCC2. Interacts preferentially with nucleotide-free and GDP-bound RAC1. Interacts with VIM (via head domain). Interacts with MICAL2; this interaction recruits MICAL2 to the actin filaments. As to expression, detected in skeletal muscle (at protein level). Detected in fibroblasts (at protein level). Ubiquitous.

Its subcellular location is the cell membrane. The protein resides in the cell projection. The protein localises to the lamellipodium. It is found in the ruffle membrane. It localises to the cytoplasm. Its subcellular location is the cytoskeleton. The protein resides in the cell cortex. The protein localises to the endosome membrane. In terms of biological role, plays a role in directed cell migration by regulating the activation and subcellular location of RAC1. Increases the presence of activated RAC1 at the leading edge of migrating cells. Required for normal organization of the cytoskeleton, including the actin cytoskeleton, microtubules and the vimentin intermediate filaments. Required for normal cell proliferation, cell migration, and normal formation of lamellipodia. Plays a role in endoplasmic reticulum-associated endosome fission: localizes to endosome membrane tubules and promotes recruitment of TMCC1, leading to recruitment of the endoplasmic reticulum to endosome tubules for fission. Endosome membrane fission of early and late endosomes is essential to separate regions destined for lysosomal degradation from carriers to be recycled to the plasma membrane. Required for normal distribution of mitochondria within cells. The chain is Coronin-1C (Coro1c) from Mus musculus (Mouse).